A 274-amino-acid chain; its full sequence is Trypsin-1 (274 aa).

Positions 1–18 are cleaved as a signal peptide; sequence MSNKIAILLAVLVAVVAC. Residues 19-47 constitute a propeptide, activation peptide; the sequence is AEAQANQRHRLVRPSPSFSPRPRYAVGQR. One can recognise a Peptidase S1 domain in the interval 48 to 273; the sequence is IVGGFEIDVS…VRDWVRENSG (226 aa). The cysteines at positions 73 and 89 are disulfide-linked. Catalysis depends on charge relay system residues His88 and Asp133. 2 disulfide bridges follow: Cys198/Cys214 and Cys225/Cys249. Catalysis depends on Ser229, which acts as the Charge relay system.

The protein belongs to the peptidase S1 family. Constitutively expressed at low level in the gut of adult females. Also expressed in the gut of male and female pupae.

It is found in the secreted. It carries out the reaction Preferential cleavage: Arg-|-Xaa, Lys-|-Xaa.. Its function is as follows. Major function may be to aid in digestion of the blood meal. The protein is Trypsin-1 (TRYP1) of Anopheles gambiae (African malaria mosquito).